Here is a 586-residue protein sequence, read N- to C-terminus: MTKTSKLDALRAATSREDLAKILDVKLVFLTNVLYRIGSDNQYTQFTIPKKGKGVRTISAPTDRLKDIQRRICDLLSDCRDEIFAIRKISNNYSFGFERGKSIILNAYKHRGKQIILNIDLKDFFESFNFGRVRGYFLSNQDFLLNPVVATTLAKAACYNGTLPQGSPCSPIISNLICNIMDMRLAKLAKKYGCTYSRYADDITISTNKNTFPLEMATVQPEGVVLGKVLVKEIENSGFEINDSKTRLTYKTSRQEVTGLTVNRIVNIDRCYYKKTRALAHALYRTGEYKVPDENGVLVSGGLDKLEGMFGFIDQVDKFNNIKKKLNKQPDRYVLTNATLHGFKLKLNAREKAYSKFIYYKFFHGNTCPTIITEGKTDRIYLKAALHSLETSYPELFREKTDSKKKEINLNIFKSNEKTKYFLDLSGGTADLKKFVERYKNNYASYYGSVPKQPVIMVLDNDTGPSDLLNFLRNKVKSCPDDVTEMRKMKYIHVFYNLYIVLTPLSPSGEQTSMEDLFPKDILDIKIDGKKFNKNNDGDSKTEYGKHIFSMRVVRDKKRKIDFKAFCCIFDAIKDIKEHYKLMLNS.

The 234-residue stretch at 29–262 folds into the Reverse transcriptase domain; it reads FLTNVLYRIG…SRQEVTGLTV (234 aa). The Mg(2+) site is built by aspartate 120, aspartate 201, and aspartate 202.

This sequence belongs to the bacterial reverse transcriptase family.

The catalysed reaction is DNA(n) + a 2'-deoxyribonucleoside 5'-triphosphate = DNA(n+1) + diphosphate. The enzyme catalyses Endonucleolytic cleavage to 5'-phosphomonoester.. Reverse transcriptase (RT) component of antiviral defense system retron Ec67, minimally composed of a non-coding RNA (ncRNA) and this RT. Expression of these 2 elements confers protection against bacteriophage T5. At multiplicity of infection (MOI) of 0.02 cultures grow normally when infected with T5 without collapsing, at MOI 2 cultures enter growth stasis. Responsible for synthesis of msDNA-Ec67 (a branched molecule with RNA linked by a 2',5'-phosphodiester bond to ssDNA). The retron transcript serves as primer (from a conserved internal G residue) and template for the reaction, and codes for the RT. Can use other retrons as substrate (msDNA-Mx162 and msDNA-Ec86). Also able to synthesize DNA from a DNA template at least in vitro, although the enzyme is less active with a DNA template. The sequence is that of Retron Ec67 protein from Escherichia coli.